The primary structure comprises 178 residues: Nuclear transcription factor Y subunit B-2 (178 aa).

A DNA-binding region spans residues 39–45; sequence LPIANIS. The segment at 66-77 is subunit association domain (SAD); that stretch reads LQECVSEFISFV. The interval 131-156 is disordered; it reads SSKAGDGSVKKDTIGPHSGASSSSAQ.

Belongs to the NFYB/HAP3 subunit family. Heterotrimeric transcription factor composed of three components, NF-YA, NF-YB and NF-YC. NF-YB and NF-YC must interact and dimerize for NF-YA association and DNA binding. Interacts with NFYC4 and NFYC6. In terms of tissue distribution, ubiquitous.

The protein resides in the nucleus. Component of the NF-Y/HAP transcription factor complex. The NF-Y complex stimulates the transcription of various genes by recognizing and binding to a CCAAT motif in promoters. May regulate the expression of photosynthetic genes, and may be involved in chloroplast and amyloplast development. This Oryza sativa subsp. japonica (Rice) protein is Nuclear transcription factor Y subunit B-2 (NFYB2).